A 22-amino-acid chain; its full sequence is Rothein 4.1 (22 aa).

Belongs to the frog skin active peptide (FSAP) family. Rothein subfamily. In terms of tissue distribution, expressed by the skin dorsal glands.

It is found in the secreted. Its function is as follows. Lacks antimicrobial activity. Does not inhibit the formation of NO by neuronal nitric oxide. The protein is Rothein 4.1 of Litoria rothii (Roth's tree frog).